Consider the following 505-residue polypeptide: ATP synthase subunit alpha, chloroplastic (505 aa).

170–177 (GDRQTGKT) provides a ligand contact to ATP.

This sequence belongs to the ATPase alpha/beta chains family. F-type ATPases have 2 components, CF(1) - the catalytic core - and CF(0) - the membrane proton channel. CF(1) has five subunits: alpha(3), beta(3), gamma(1), delta(1), epsilon(1). CF(0) has four main subunits: a, b, b' and c.

It is found in the plastid. Its subcellular location is the chloroplast thylakoid membrane. It carries out the reaction ATP + H2O + 4 H(+)(in) = ADP + phosphate + 5 H(+)(out). Produces ATP from ADP in the presence of a proton gradient across the membrane. The alpha chain is a regulatory subunit. This chain is ATP synthase subunit alpha, chloroplastic, found in Oenothera elata subsp. hookeri (Hooker's evening primrose).